The primary structure comprises 574 residues: Glutamyl-tRNA(Gln) amidotransferase subunit B, mitochondrial (574 aa).

It belongs to the GatB/GatE family. GatB subfamily. In terms of assembly, subunit of the heterotrimeric GatCAB amidotransferase (AdT) complex, composed of A, B and C subunits.

The protein localises to the mitochondrion. The catalysed reaction is L-glutamyl-tRNA(Gln) + L-glutamine + ATP + H2O = L-glutaminyl-tRNA(Gln) + L-glutamate + ADP + phosphate + H(+). Allows the formation of correctly charged Gln-tRNA(Gln) through the transamidation of misacylated Glu-tRNA(Gln) in the mitochondria. The reaction takes place in the presence of glutamine and ATP through an activated gamma-phospho-Glu-tRNA(Gln). The polypeptide is Glutamyl-tRNA(Gln) amidotransferase subunit B, mitochondrial (Phytophthora infestans (strain T30-4) (Potato late blight agent)).